A 127-amino-acid chain; its full sequence is Mu-like prophage FluMu protein gp41 (127 aa).

The interval 107–127 (VSRGRLDTADQETGKDLSAVS) is disordered. Basic and acidic residues predominate over residues 110–121 (GRLDTADQETGK).

It to phage Mu protein gp41.

The sequence is that of Mu-like prophage FluMu protein gp41 from Haemophilus influenzae (strain ATCC 51907 / DSM 11121 / KW20 / Rd).